A 146-amino-acid chain; its full sequence is Large ribosomal subunit protein uL13 (146 aa).

Belongs to the universal ribosomal protein uL13 family. Part of the 50S ribosomal subunit.

Functionally, this protein is one of the early assembly proteins of the 50S ribosomal subunit, although it is not seen to bind rRNA by itself. It is important during the early stages of 50S assembly. The protein is Large ribosomal subunit protein uL13 of Borreliella burgdorferi (strain ATCC 35210 / DSM 4680 / CIP 102532 / B31) (Borrelia burgdorferi).